Reading from the N-terminus, the 241-residue chain is DNA repair protein RecO (241 aa).

The protein belongs to the RecO family.

Functionally, involved in DNA repair and RecF pathway recombination. This chain is DNA repair protein RecO, found in Xanthomonas campestris pv. campestris (strain B100).